A 236-amino-acid polypeptide reads, in one-letter code: Probable 2-phosphosulfolactate phosphatase (236 aa).

The protein belongs to the ComB family. Requires Mg(2+) as cofactor.

It carries out the reaction (2R)-O-phospho-3-sulfolactate + H2O = (2R)-3-sulfolactate + phosphate. This Gloeobacter violaceus (strain ATCC 29082 / PCC 7421) protein is Probable 2-phosphosulfolactate phosphatase.